The following is a 249-amino-acid chain: Orotidine 5'-phosphate decarboxylase (249 aa).

Substrate is bound by residues D21, K43, 72–81, T128, R193, Q204, G224, and R225; that span reads DLKLYDIPET. K74 acts as the Proton donor in catalysis.

Belongs to the OMP decarboxylase family. Type 1 subfamily. In terms of assembly, homodimer.

The enzyme catalyses orotidine 5'-phosphate + H(+) = UMP + CO2. Its pathway is pyrimidine metabolism; UMP biosynthesis via de novo pathway; UMP from orotate: step 2/2. In terms of biological role, catalyzes the decarboxylation of orotidine 5'-monophosphate (OMP) to uridine 5'-monophosphate (UMP). The protein is Orotidine 5'-phosphate decarboxylase of Desulfosudis oleivorans (strain DSM 6200 / JCM 39069 / Hxd3) (Desulfococcus oleovorans).